Here is a 475-residue protein sequence, read N- to C-terminus: MKIIQAAVEFAPFIKAGGLGDAVYSLSKALSASHDVEVLLPFYPCIFPTVSSQVIDEKVFAYEFLGRQHASSISYSYEGMILTVITLDSQLELFSTSTIYTQDDTLRFSAFSAAAAAYIQKLNHVDIVHMHDWHTGLLPGLLKEPNRQHYPKRIFTIHNFSYRGYCSTQLLGASGISEFGLSNYQLFRDPQVSVLLKGALYCSDYITTVSPTYAQDILHDYSDYEMHDAIMARRHVFRGILNGIDDNIWNPETDSSLVANYGKNLLDSPEILFTKKEENKVALYEKLGMSPEHSPLLCIISRIVEQKGPEFMKAAILHAMENGYAFILVGKCYDEETQRKFSNLQESLTMSPNVRIILDYNEPLARLLYGAADMLCIPSHFEPCGLTQLIGMRYGTVPLARATGGLADTVTPGINGFTFSHADNFNDFFRMLSQAVTTYRHEPDVWFQLVEEGMLRSSGLSTMAMHYLEIYNSLL.

Lysine 15 contacts ADP-alpha-D-glucose.

It belongs to the glycosyltransferase 1 family. Bacterial/plant glycogen synthase subfamily.

It carries out the reaction [(1-&gt;4)-alpha-D-glucosyl](n) + ADP-alpha-D-glucose = [(1-&gt;4)-alpha-D-glucosyl](n+1) + ADP + H(+). Its pathway is glycan biosynthesis; glycogen biosynthesis. Its function is as follows. Synthesizes alpha-1,4-glucan chains using ADP-glucose. The chain is Glycogen synthase from Chlamydia felis (strain Fe/C-56) (Chlamydophila felis).